Here is a 573-residue protein sequence, read N- to C-terminus: 3-(3-hydroxy-phenyl)propionate/3-hydroxycinnamic acid hydroxylase (573 aa).

Residues 18-47 and 283-293 contribute to the FAD site; these read DVVIVGAGPVGLTLANILGLQGVRTMIVEE and FRKGRMFLAGD.

This sequence belongs to the PheA/TfdB FAD monooxygenase family. The cofactor is FAD.

The enzyme catalyses 3-(3-hydroxyphenyl)propanoate + NADH + O2 + H(+) = 3-(2,3-dihydroxyphenyl)propanoate + NAD(+) + H2O. It carries out the reaction (2E)-3-(3-hydroxyphenyl)prop-2-enoate + NADH + O2 + H(+) = (2E)-3-(2,3-dihydroxyphenyl)prop-2-enoate + NAD(+) + H2O. It functions in the pathway aromatic compound metabolism; 3-phenylpropanoate degradation. Its function is as follows. Catalyzes the insertion of one atom of molecular oxygen into position 2 of the phenyl ring of 3-(3-hydroxyphenyl)propionate (3-HPP) and hydroxycinnamic acid (3HCI). The chain is 3-(3-hydroxy-phenyl)propionate/3-hydroxycinnamic acid hydroxylase from Mycobacterium sp. (strain KMS).